We begin with the raw amino-acid sequence, 142 residues long: Succinate dehydrogenase assembly factor 2, mitochondrial (142 aa).

It belongs to the SDHAF2 family. In terms of assembly, interacts with the flavoprotein subunit within the SDH catalytic dimer.

It is found in the mitochondrion matrix. Its function is as follows. Plays an essential role in the assembly of succinate dehydrogenase (SDH), an enzyme complex (also referred to as respiratory complex II) that is a component of both the tricarboxylic acid (TCA) cycle and the mitochondrial electron transport chain, and which couples the oxidation of succinate to fumarate with the reduction of ubiquinone (coenzyme Q) to ubiquinol. Required for flavinylation (covalent attachment of FAD) of the flavoprotein subunit of the SDH catalytic dimer. The chain is Succinate dehydrogenase assembly factor 2, mitochondrial from Debaryomyces hansenii (strain ATCC 36239 / CBS 767 / BCRC 21394 / JCM 1990 / NBRC 0083 / IGC 2968) (Yeast).